Consider the following 796-residue polypeptide: YY1-associated protein 1 (796 aa).

2 disordered regions span residues 1 to 45 (MEEE…ATPS) and 463 to 488 (IQPS…SEAP). A compositionally biased stretch (basic and acidic residues) spans 23-36 (PPDKREGSAVDPGK). Residues 463–472 (IQPSPSLQPS) are compositionally biased toward low complexity. Positions 473 to 485 (FNPGKTPAQSTHS) are enriched in polar residues. Phosphoserine is present on Ser-724. The segment at 755-776 (RQALEPLPQGIQESLNNSSPGD) is disordered. Positions 765–774 (IQESLNNSSP) are enriched in polar residues.

As to quaternary structure, interacts with YY1. Interacts with MAD2L2. Interacts with INO80. Ubiquitous. Detected in small intestine, skeletal muscle, lung, pancreas, brain, stomach, spleen, colon and heart. Detected at very low levels in healthy liver. Highly expressed in most liver carcinomas.

It is found in the cytoplasm. The protein resides in the nucleus. The protein localises to the nucleoplasm. It localises to the nucleolus. In terms of biological role, associates with the INO80 chromatin remodeling complex, which is responsible for transcriptional regulation, DNA repair, and replication. Enhances transcription activation by YY1. Plays a role in cell cycle regulation. The chain is YY1-associated protein 1 from Homo sapiens (Human).